Here is a 406-residue protein sequence, read N- to C-terminus: Multifunctional CCA protein (406 aa).

ATP contacts are provided by glycine 8 and arginine 11. Residues glycine 8 and arginine 11 each contribute to the CTP site. Mg(2+)-binding residues include aspartate 21 and aspartate 23. Residues arginine 91, arginine 137, and arginine 140 each contribute to the ATP site. Residues arginine 91, arginine 137, and arginine 140 each coordinate CTP. An HD domain is found at 228–329; sequence TGIHTLMVAQ…IKILNKFDVW (102 aa).

Belongs to the tRNA nucleotidyltransferase/poly(A) polymerase family. Bacterial CCA-adding enzyme type 1 subfamily. In terms of assembly, monomer. Can also form homodimers and oligomers. Mg(2+) serves as cofactor. Ni(2+) is required as a cofactor.

It carries out the reaction a tRNA precursor + 2 CTP + ATP = a tRNA with a 3' CCA end + 3 diphosphate. The catalysed reaction is a tRNA with a 3' CCA end + 2 CTP + ATP = a tRNA with a 3' CCACCA end + 3 diphosphate. Functionally, catalyzes the addition and repair of the essential 3'-terminal CCA sequence in tRNAs without using a nucleic acid template. Adds these three nucleotides in the order of C, C, and A to the tRNA nucleotide-73, using CTP and ATP as substrates and producing inorganic pyrophosphate. tRNA 3'-terminal CCA addition is required both for tRNA processing and repair. Also involved in tRNA surveillance by mediating tandem CCA addition to generate a CCACCA at the 3' terminus of unstable tRNAs. While stable tRNAs receive only 3'-terminal CCA, unstable tRNAs are marked with CCACCA and rapidly degraded. In Vibrio campbellii (strain ATCC BAA-1116), this protein is Multifunctional CCA protein.